A 115-amino-acid chain; its full sequence is Cytochrome c oxidase subunit 3 (115 aa).

Transmembrane regions (helical) follow at residues 32 to 52 (CLQG…LQGL) and 70 to 90 (FFLA…FLMI).

This sequence belongs to the cytochrome c oxidase subunit 3 family. As to quaternary structure, component of the cytochrome c oxidase (complex IV, CIV), a multisubunit enzyme composed of a catalytic core of 3 subunits and several supernumerary subunits. The complex exists as a monomer or a dimer and forms supercomplexes (SCs) in the inner mitochondrial membrane with ubiquinol-cytochrome c oxidoreductase (cytochrome b-c1 complex, complex III, CIII).

The protein localises to the mitochondrion inner membrane. It carries out the reaction 4 Fe(II)-[cytochrome c] + O2 + 8 H(+)(in) = 4 Fe(III)-[cytochrome c] + 2 H2O + 4 H(+)(out). Its function is as follows. Component of the cytochrome c oxidase, the last enzyme in the mitochondrial electron transport chain which drives oxidative phosphorylation. The respiratory chain contains 3 multisubunit complexes succinate dehydrogenase (complex II, CII), ubiquinol-cytochrome c oxidoreductase (cytochrome b-c1 complex, complex III, CIII) and cytochrome c oxidase (complex IV, CIV), that cooperate to transfer electrons derived from NADH and succinate to molecular oxygen, creating an electrochemical gradient over the inner membrane that drives transmembrane transport and the ATP synthase. Cytochrome c oxidase is the component of the respiratory chain that catalyzes the reduction of oxygen to water. Electrons originating from reduced cytochrome c in the intermembrane space (IMS) are transferred via the dinuclear copper A center (CU(A)) of subunit 2 and heme A of subunit 1 to the active site in subunit 1, a binuclear center (BNC) formed by heme A3 and copper B (CU(B)). The BNC reduces molecular oxygen to 2 water molecules using 4 electrons from cytochrome c in the IMS and 4 protons from the mitochondrial matrix. The protein is Cytochrome c oxidase subunit 3 (COIII) of Artemia salina (Brine shrimp).